Reading from the N-terminus, the 595-residue chain is Aspartate--tRNA(Asp/Asn) ligase (595 aa).

Residue glutamate 175 coordinates L-aspartate. The interval 199-202 is aspartate; that stretch reads QQYK. L-aspartate contacts are provided by arginine 221 and histidine 454. An ATP-binding site is contributed by 221-223; that stretch reads RDE. Glutamate 488 contacts ATP. Arginine 495 is a binding site for L-aspartate. 540–543 contributes to the ATP binding site; sequence GIDR.

The protein belongs to the class-II aminoacyl-tRNA synthetase family. Type 1 subfamily. In terms of assembly, homodimer.

It localises to the cytoplasm. It catalyses the reaction tRNA(Asx) + L-aspartate + ATP = L-aspartyl-tRNA(Asx) + AMP + diphosphate. Its function is as follows. Aspartyl-tRNA synthetase with relaxed tRNA specificity since it is able to aspartylate not only its cognate tRNA(Asp) but also tRNA(Asn). Reaction proceeds in two steps: L-aspartate is first activated by ATP to form Asp-AMP and then transferred to the acceptor end of tRNA(Asp/Asn). The polypeptide is Aspartate--tRNA(Asp/Asn) ligase (Sinorhizobium medicae (strain WSM419) (Ensifer medicae)).